Here is a 107-residue protein sequence, read N- to C-terminus: Insulin-like peptide 6 (107 aa).

Residues 1–33 (MVLKVPTSKVLLVLATLFAVAAMISSWMPQVAA) form the signal peptide. Intrachain disulfides connect cysteine 48-cysteine 91, cysteine 60-cysteine 105, and cysteine 90-cysteine 96. A propeptide spans 67–76 (LGDVFPNSFG) (connecting peptide).

This sequence belongs to the insulin family. Heterodimer of a B chain and an A chain linked by two disulfide bonds. In terms of tissue distribution, expressed at a low level in the larval gut.

The protein localises to the secreted. Functionally, possible ligand of InR/insulin-like receptor. The chain is Insulin-like peptide 6 from Drosophila melanogaster (Fruit fly).